Consider the following 282-residue polypeptide: Phosphatidylglycerol--prolipoprotein diacylglyceryl transferase (282 aa).

Helical transmembrane passes span 19 to 39 (IGPF…VFGW), 58 to 78 (ISLV…ILGG), and 104 to 124 (GGMS…WFAY). Residue arginine 149 coordinates a 1,2-diacyl-sn-glycero-3-phospho-(1'-sn-glycerol). Transmembrane regions (helical) follow at residues 190–210 (AGME…LGAL), 214–234 (GMIL…GEHF), and 250–270 (MGML…VLAI).

This sequence belongs to the Lgt family.

It localises to the cell inner membrane. The catalysed reaction is L-cysteinyl-[prolipoprotein] + a 1,2-diacyl-sn-glycero-3-phospho-(1'-sn-glycerol) = an S-1,2-diacyl-sn-glyceryl-L-cysteinyl-[prolipoprotein] + sn-glycerol 1-phosphate + H(+). It participates in protein modification; lipoprotein biosynthesis (diacylglyceryl transfer). Catalyzes the transfer of the diacylglyceryl group from phosphatidylglycerol to the sulfhydryl group of the N-terminal cysteine of a prolipoprotein, the first step in the formation of mature lipoproteins. In Bradyrhizobium diazoefficiens (strain JCM 10833 / BCRC 13528 / IAM 13628 / NBRC 14792 / USDA 110), this protein is Phosphatidylglycerol--prolipoprotein diacylglyceryl transferase.